A 272-amino-acid chain; its full sequence is B3 domain-containing protein Os10g0323000 (272 aa).

The segment at residues 39–132 (RYGENRKHGQ…TLDLLILDKH (94 aa)) is a DNA-binding region (TF-B3 1). The tract at residues 139–171 (PPSKRDLKLKSKRSTHQDSKGHPSNTDPGPSRI) is disordered. The segment covering 141 to 159 (SKRDLKLKSKRSTHQDSKG) has biased composition (basic and acidic residues). A DNA-binding region (TF-B3 2) is located at residues 180–272 (ESSANTQLLV…THLGVIVDIF (93 aa)).

Its subcellular location is the nucleus. This chain is B3 domain-containing protein Os10g0323000, found in Oryza sativa subsp. japonica (Rice).